The chain runs to 173 residues: Crossover junction endodeoxyribonuclease RuvC (173 aa).

Residues Asp8, Glu67, and Asp139 contribute to the active site. Positions 8, 67, and 139 each coordinate Mg(2+).

This sequence belongs to the RuvC family. Homodimer which binds Holliday junction (HJ) DNA. The HJ becomes 2-fold symmetrical on binding to RuvC with unstacked arms; it has a different conformation from HJ DNA in complex with RuvA. In the full resolvosome a probable DNA-RuvA(4)-RuvB(12)-RuvC(2) complex forms which resolves the HJ. Requires Mg(2+) as cofactor.

It is found in the cytoplasm. It catalyses the reaction Endonucleolytic cleavage at a junction such as a reciprocal single-stranded crossover between two homologous DNA duplexes (Holliday junction).. Functionally, the RuvA-RuvB-RuvC complex processes Holliday junction (HJ) DNA during genetic recombination and DNA repair. Endonuclease that resolves HJ intermediates. Cleaves cruciform DNA by making single-stranded nicks across the HJ at symmetrical positions within the homologous arms, yielding a 5'-phosphate and a 3'-hydroxyl group; requires a central core of homology in the junction. The consensus cleavage sequence is 5'-(A/T)TT(C/G)-3'. Cleavage occurs on the 3'-side of the TT dinucleotide at the point of strand exchange. HJ branch migration catalyzed by RuvA-RuvB allows RuvC to scan DNA until it finds its consensus sequence, where it cleaves and resolves the cruciform DNA. The chain is Crossover junction endodeoxyribonuclease RuvC from Edwardsiella ictaluri (strain 93-146).